The sequence spans 289 residues: 4-diphosphocytidyl-2-C-methyl-D-erythritol kinase (289 aa).

Lys10 is a catalytic residue. ATP is bound at residue 94–104 (PVAAGLAGGSS). Asp136 is a catalytic residue.

It belongs to the GHMP kinase family. IspE subfamily.

It carries out the reaction 4-CDP-2-C-methyl-D-erythritol + ATP = 4-CDP-2-C-methyl-D-erythritol 2-phosphate + ADP + H(+). It functions in the pathway isoprenoid biosynthesis; isopentenyl diphosphate biosynthesis via DXP pathway; isopentenyl diphosphate from 1-deoxy-D-xylulose 5-phosphate: step 3/6. In terms of biological role, catalyzes the phosphorylation of the position 2 hydroxy group of 4-diphosphocytidyl-2C-methyl-D-erythritol. This Bacillus anthracis protein is 4-diphosphocytidyl-2-C-methyl-D-erythritol kinase.